A 612-amino-acid chain; its full sequence is uncharacterized protein (612 aa).

Positions 171 to 217 (MLPPSLVQRNNATTSPTTDSASENNESVPSLTSSVSTSSSVYSSWNP) are disordered. Residues 177-196 (VQRNNATTSPTTDSASENNE) show a composition bias toward polar residues. The segment covering 197–214 (SVPSLTSSVSTSSSVYSS) has biased composition (low complexity).

This sequence to yeast YNL018c.

This is an uncharacterized protein from Saccharomyces cerevisiae (strain ATCC 204508 / S288c) (Baker's yeast).